The sequence spans 309 residues: Thermolabile glutaminase (309 aa).

Substrate is bound by residues Ser-64, Asn-114, Glu-160, Asn-167, Tyr-191, Tyr-243, and Val-261.

The protein belongs to the glutaminase family. In terms of assembly, homotetramer.

The catalysed reaction is L-glutamine + H2O = L-glutamate + NH4(+). This chain is Thermolabile glutaminase (glsA), found in Rhizobium etli (strain ATCC 51251 / DSM 11541 / JCM 21823 / NBRC 15573 / CFN 42).